The sequence spans 87 residues: Small ribosomal subunit protein eS21 (87 aa).

Belongs to the eukaryotic ribosomal protein eS21 family. Component of the small ribosomal subunit. Mature ribosomes consist of a small (40S) and a large (60S) subunit. The 40S subunit contains about 33 different proteins and 1 molecule of RNA (18S). The 60S subunit contains about 49 different proteins and 3 molecules of RNA (25S, 5.8S and 5S).

The protein resides in the cytoplasm. Required for the processing of the 20S rRNA-precursor to mature 18S rRNA in a late step of the maturation of 40S ribosomal subunits. Has a physiological role leading to 18S rRNA stability. This chain is Small ribosomal subunit protein eS21 (RPS21), found in Eremothecium gossypii (strain ATCC 10895 / CBS 109.51 / FGSC 9923 / NRRL Y-1056) (Yeast).